Consider the following 396-residue polypeptide: uncharacterized protein (396 aa).

At Lys219 the chain carries N6-(pyridoxal phosphate)lysine.

The protein belongs to the class-V pyridoxal-phosphate-dependent aminotransferase family. Pyridoxal 5'-phosphate is required as a cofactor.

It is found in the cytoplasm. It localises to the nucleus. This is an uncharacterized protein from Schizosaccharomyces pombe (strain 972 / ATCC 24843) (Fission yeast).